A 297-amino-acid chain; its full sequence is tRNA-cytidine(32) 2-sulfurtransferase (297 aa).

The PP-loop motif signature appears at 45-50; the sequence is SGGKDS. 3 residues coordinate [4Fe-4S] cluster: Cys120, Cys123, and Cys211.

This sequence belongs to the TtcA family. As to quaternary structure, homodimer. Mg(2+) serves as cofactor. The cofactor is [4Fe-4S] cluster.

The protein localises to the cytoplasm. It carries out the reaction cytidine(32) in tRNA + S-sulfanyl-L-cysteinyl-[cysteine desulfurase] + AH2 + ATP = 2-thiocytidine(32) in tRNA + L-cysteinyl-[cysteine desulfurase] + A + AMP + diphosphate + H(+). Its pathway is tRNA modification. Its function is as follows. Catalyzes the ATP-dependent 2-thiolation of cytidine in position 32 of tRNA, to form 2-thiocytidine (s(2)C32). The sulfur atoms are provided by the cysteine/cysteine desulfurase (IscS) system. The protein is tRNA-cytidine(32) 2-sulfurtransferase of Vibrio campbellii (strain ATCC BAA-1116).